The following is a 37-amino-acid chain: Cytochrome b6-f complex subunit 7 (37 aa).

The chain crosses the membrane as a helical span at residues 5–25 (IFGTAFLFIVLVPVGLALGAF).

The protein belongs to the PetM family. The 4 large subunits of the cytochrome b6-f complex are cytochrome b6, subunit IV (17 kDa polypeptide, PetD), cytochrome f and the Rieske protein, while the 4 small subunits are PetG, PetL, PetM and PetN. The complex functions as a dimer.

It localises to the cellular thylakoid membrane. Functionally, component of the cytochrome b6-f complex, which mediates electron transfer between photosystem II (PSII) and photosystem I (PSI), cyclic electron flow around PSI, and state transitions. This chain is Cytochrome b6-f complex subunit 7, found in Synechococcus elongatus (strain ATCC 33912 / PCC 7942 / FACHB-805) (Anacystis nidulans R2).